A 262-amino-acid polypeptide reads, in one-letter code: Nurim (262 aa).

Over 1–4 (MAPA) the chain is Nuclear. A helical membrane pass occupies residues 5–28 (LLLIPAALASFILAFGTGVEFVRF). At 29–58 (TSLRPLLGGIPESGGPDARQGWLAALQDRS) the chain is on the perinuclear space side. The helical transmembrane segment at 59-80 (ILAPLAWDLGLLLLFVGQHSLM) threads the bilayer. Residues 81 to 97 (AAERVKAWTSRYFGVLQ) lie on the Nuclear side of the membrane. The helical transmembrane segment at 98 to 114 (RSLYVACTALALQLVMR) threads the bilayer. Residues 115–133 (YWEPIPKGPVLWEARAEPW) are Perinuclear space-facing. Residues 134–164 (ATWVPLLCFVLHVISWLLIFSILLVFDYAEL) traverse the membrane as a helical segment. Residues 165–191 (MGLKQVYYHVLGLGEPLALKSPRALRL) are Nuclear-facing. The helical transmembrane segment at 192 to 210 (FSHLRHPVCVELLTVLWVV) threads the bilayer. Over 211–216 (PTLGTD) the chain is Perinuclear space. A helical transmembrane segment spans residues 217-234 (RLLLAFLLTLYLGLAHGL). Over 235–262 (DQQDLRYLRAQLQRKLHLLSRPQDGEAE) the chain is Nuclear.

Belongs to the nurim family.

It localises to the nucleus inner membrane. The sequence is that of Nurim (NRM) from Homo sapiens (Human).